Reading from the N-terminus, the 527-residue chain is Baicalin-beta-D-glucuronidase (527 aa).

The first 25 residues, 1–25 (MGFQVWQKGLCVLCFSLIFICGVIG), serve as a signal peptide directing secretion. Glu212 acts as the Proton donor in catalysis. The active-site Nucleophile is Glu329.

This sequence belongs to the glycosyl hydrolase 79 family. Homotetramer.

It carries out the reaction baicalin + H2O = baicalein + D-glucuronate + H(+). In terms of biological role, beta-glucuronidase involved in the initiation of H(2)O(2) metabolism via the production of baicalein. Unable to use glycyrrhizin, gypsogenin-3-O-D-glucuronide, luteolin-7-O-D-glucoside and apigenin-7-O-D-glucoside as substrates. The chain is Baicalin-beta-D-glucuronidase (SGUS) from Scutellaria baicalensis (Baical skullcap).